The chain runs to 218 residues: MSKISLDALNVRNALIEKGIETPMIDPTQAKDERRESIAKHMHEVMKLIGLDLRDDSLEETPNRLAKMFIDEIFSGMDYANFPKMTKIKNQMKVSEMVQVNDITLTSTCEHHFVTIDGKVCVAYYPKDWVIGLSKINRIVSFFAQRPQVQERLTEQLLTAFQTILETDDVAVYVKATHFCVKARGIRDTNSYTVTSAYGGVFLEDRDTRKEFLATVQK.

Zn(2+) is bound by residues Cys-109, His-112, and Cys-180.

Belongs to the GTP cyclohydrolase I family. As to quaternary structure, toroid-shaped homodecamer, composed of two pentamers of five dimers.

It catalyses the reaction GTP + H2O = 7,8-dihydroneopterin 3'-triphosphate + formate + H(+). It participates in cofactor biosynthesis; 7,8-dihydroneopterin triphosphate biosynthesis; 7,8-dihydroneopterin triphosphate from GTP: step 1/1. The chain is GTP cyclohydrolase 1 from Haemophilus influenzae (strain 86-028NP).